We begin with the raw amino-acid sequence, 485 residues long: Acetyl-coenzyme A carboxylase carboxyl transferase subunit beta, chloroplastic (485 aa).

Residues 218-485 (LWIQCDNCYA…FFPLNKNEIK (268 aa)) enclose the CoA carboxyltransferase N-terminal domain. The Zn(2+) site is built by cysteine 222, cysteine 225, cysteine 241, and cysteine 244. Residues 222-244 (CDNCYALIYKKALKFKMNVCEQC) form a C4-type zinc finger.

The protein belongs to the AccD/PCCB family. As to quaternary structure, acetyl-CoA carboxylase is a heterohexamer composed of biotin carboxyl carrier protein, biotin carboxylase and 2 subunits each of ACCase subunit alpha and ACCase plastid-coded subunit beta (accD). Zn(2+) is required as a cofactor.

It is found in the plastid. The protein localises to the chloroplast stroma. It catalyses the reaction N(6)-carboxybiotinyl-L-lysyl-[protein] + acetyl-CoA = N(6)-biotinyl-L-lysyl-[protein] + malonyl-CoA. It participates in lipid metabolism; malonyl-CoA biosynthesis; malonyl-CoA from acetyl-CoA: step 1/1. Its function is as follows. Component of the acetyl coenzyme A carboxylase (ACC) complex. Biotin carboxylase (BC) catalyzes the carboxylation of biotin on its carrier protein (BCCP) and then the CO(2) group is transferred by the transcarboxylase to acetyl-CoA to form malonyl-CoA. The chain is Acetyl-coenzyme A carboxylase carboxyl transferase subunit beta, chloroplastic from Aethionema cordifolium (Lebanon stonecress).